A 325-amino-acid chain; its full sequence is Biotin synthase (325 aa).

The 219-residue stretch at 36–254 folds into the Radical SAM core domain; that stretch reads NEVQLAMLLS…IALARIMFPK (219 aa). Cys51, Cys55, and Cys58 together coordinate [4Fe-4S] cluster. [2Fe-2S] cluster-binding residues include Cys95, Cys126, Cys186, and Arg258.

It belongs to the radical SAM superfamily. Biotin synthase family. Homodimer. It depends on [4Fe-4S] cluster as a cofactor. The cofactor is [2Fe-2S] cluster.

It carries out the reaction (4R,5S)-dethiobiotin + (sulfur carrier)-SH + 2 reduced [2Fe-2S]-[ferredoxin] + 2 S-adenosyl-L-methionine = (sulfur carrier)-H + biotin + 2 5'-deoxyadenosine + 2 L-methionine + 2 oxidized [2Fe-2S]-[ferredoxin]. The protein operates within cofactor biosynthesis; biotin biosynthesis; biotin from 7,8-diaminononanoate: step 2/2. Its function is as follows. Catalyzes the conversion of dethiobiotin (DTB) to biotin by the insertion of a sulfur atom into dethiobiotin via a radical-based mechanism. In Neorickettsia sennetsu (strain ATCC VR-367 / Miyayama) (Ehrlichia sennetsu), this protein is Biotin synthase.